Here is a 193-residue protein sequence, read N- to C-terminus: Putative RNA methyltransferase At5g10620 (193 aa).

Residues leucine 110, glycine 142, and 161–166 (LSSMVL) each bind S-adenosyl-L-methionine.

Belongs to the RNA methyltransferase RlmH family.

This Arabidopsis thaliana (Mouse-ear cress) protein is Putative RNA methyltransferase At5g10620.